The following is a 154-amino-acid chain: C-type lectin 16 (154 aa).

The signal sequence occupies residues 1 to 20 (MALSLYLIAVICSLVGFTAS). A C-type lectin domain is found at 27-152 (DNRFCFPNVV…CASMRRFVCE (126 aa)). 2 disulfide bridges follow: cysteine 46-cysteine 151 and cysteine 123-cysteine 143.

As to quaternary structure, (Microbial infection) Interacts with non-structural protein 1 of dengue virus type 2. Interacts with envelope protein E of dengue virus type 2. In terms of tissue distribution, female salivary gland (at protein level). Not detected in female carcass without salivary glands (at protein level). Not detected in male tissues (at protein level).

The protein resides in the secreted. In terms of biological role, putative lectin. May have a regulatory role in mosquito immunity. Probably suppresses replication of dengue virus type 2 in mosquito salivary glands. The polypeptide is C-type lectin 16 (Aedes aegypti (Yellowfever mosquito)).